A 196-amino-acid chain; its full sequence is ATP-dependent Clp protease proteolytic subunit (196 aa).

Ser-98 functions as the Nucleophile in the catalytic mechanism. His-123 is an active-site residue.

This sequence belongs to the peptidase S14 family. Fourteen ClpP subunits assemble into 2 heptameric rings which stack back to back to give a disk-like structure with a central cavity, resembling the structure of eukaryotic proteasomes.

Its subcellular location is the cytoplasm. It carries out the reaction Hydrolysis of proteins to small peptides in the presence of ATP and magnesium. alpha-casein is the usual test substrate. In the absence of ATP, only oligopeptides shorter than five residues are hydrolyzed (such as succinyl-Leu-Tyr-|-NHMec, and Leu-Tyr-Leu-|-Tyr-Trp, in which cleavage of the -Tyr-|-Leu- and -Tyr-|-Trp bonds also occurs).. Its function is as follows. Cleaves peptides in various proteins in a process that requires ATP hydrolysis. Has a chymotrypsin-like activity. Plays a major role in the degradation of misfolded proteins. ClpXP is involved in the complete degradation of the Site-2 clipped anti-sigma-W factor RsiW. This results in the release of SigW and the transcription activation of the genes under the control of the sigma-W factor. This Geobacillus kaustophilus (strain HTA426) protein is ATP-dependent Clp protease proteolytic subunit.